The sequence spans 366 residues: MKPVDSLSGLSEHLSVHALCRRFGAFTALDQASLSIRKGEFVCLLGPSGCGKTTLLRLIAGLDLPDAGAIRLSGRDITRTAPAKRDYGIVFQSYALFPNLTVADNIAYGLTPRRDKAGHAHRVRELLDMVGLPGSEGKYPSQLSGGQQQRVALARALATSPGLLLLDEPLSALDARVRDKLREELKGLQRRLGVTTMMVTHDQEEALSIADRVVVMNAGRIEQTGTPAEIYRSPASRFVAEFVGDANWLPAERRGGREAAVGGCVLSLARDLPDAEALTLFIRPEDVIVKPRWAPAANTLLARVEDVSFGGAMTRLRLRPEGMPGLILRAEICPSMLNRQPLVPGEIVPVELPAAQLRAYPGEAAC.

The 230-residue stretch at 14–243 folds into the ABC transporter domain; it reads LSVHALCRRF…PASRFVAEFV (230 aa). 46-53 provides a ligand contact to ATP; that stretch reads GPSGCGKT.

The protein belongs to the ABC transporter superfamily. Sulfate/tungstate importer (TC 3.A.1.6) family. The complex is composed of two ATP-binding proteins (CysA), two transmembrane proteins (CysT and CysW) and a solute-binding protein (CysP).

It localises to the cell inner membrane. The enzyme catalyses sulfate(out) + ATP + H2O = sulfate(in) + ADP + phosphate + H(+). It catalyses the reaction thiosulfate(out) + ATP + H2O = thiosulfate(in) + ADP + phosphate + H(+). In terms of biological role, part of the ABC transporter complex CysAWTP involved in sulfate/thiosulfate import. Responsible for energy coupling to the transport system. The chain is Sulfate/thiosulfate import ATP-binding protein CysA 2 from Chromobacterium violaceum (strain ATCC 12472 / DSM 30191 / JCM 1249 / CCUG 213 / NBRC 12614 / NCIMB 9131 / NCTC 9757 / MK).